The sequence spans 336 residues: Phenylalanine--tRNA ligase alpha subunit (336 aa).

Residue Glu-263 coordinates Mg(2+).

This sequence belongs to the class-II aminoacyl-tRNA synthetase family. Phe-tRNA synthetase alpha subunit type 1 subfamily. As to quaternary structure, tetramer of two alpha and two beta subunits. It depends on Mg(2+) as a cofactor.

Its subcellular location is the cytoplasm. The enzyme catalyses tRNA(Phe) + L-phenylalanine + ATP = L-phenylalanyl-tRNA(Phe) + AMP + diphosphate + H(+). The protein is Phenylalanine--tRNA ligase alpha subunit of Thermosynechococcus vestitus (strain NIES-2133 / IAM M-273 / BP-1).